Here is a 109-residue protein sequence, read N- to C-terminus: uncharacterized protein (109 aa).

The segment at 1–26 (MTPRSLPRYGNSSRRKSFPMHRPSNV) is disordered.

This is an uncharacterized protein from Mycobacterium bovis (strain ATCC BAA-935 / AF2122/97).